The following is a 122-amino-acid chain: Large ribosomal subunit protein uL14 (122 aa).

This sequence belongs to the universal ribosomal protein uL14 family. Part of the 50S ribosomal subunit. Forms a cluster with proteins L3 and L19. In the 70S ribosome, L14 and L19 interact and together make contacts with the 16S rRNA in bridges B5 and B8.

Binds to 23S rRNA. Forms part of two intersubunit bridges in the 70S ribosome. This Oleidesulfovibrio alaskensis (strain ATCC BAA-1058 / DSM 17464 / G20) (Desulfovibrio alaskensis) protein is Large ribosomal subunit protein uL14.